The chain runs to 351 residues: Cytoplasmic dynein 2 light intermediate chain 1 (351 aa).

The interval 304-335 is disordered; that stretch reads TLKAIQDPARDPQYAESEVDEMRVQKDQELEQ. The span at 323–335 shows a compositional bias: basic and acidic residues; that stretch reads DEMRVQKDQELEQ.

The protein belongs to the dynein light intermediate chain family. Light intermediate chain of the cytoplasmic dynein complex 2, a multisubunit complex composed at least of eleven different proteins. The cytoplasmic dynein 2 complex consists of two catalytic heavy chains (HCs) and a number of non-catalytic subunits presented by intermediate chains (ICs), light intermediate chains (LICs) and light chains (LCs). Among them, a heavy chain (DYNC2H1), two intermediate chains (DYNC2I2 and DYNC2I1), a light intermediate chain (DYNC2LI1), and a light chain (DYNLT2B) are unique to the dynein-2 complex, but a subset of light chains are also shared by dynein-1 and dynein-2 complexes. Dynein-2 complex is built around two copies of cytoplasmic dynein 2 heavy chain 1 (DYNC2H1). The C-terminal region forms the motor domain, which converts the energy from ATP hydrolysis into movement. Its N-terminal region forms the tail, an extended structure that binds the other subunits and holds the two heavy chains in a homodimer. Interacts with DYNC2H1 (via N-terminus); this interaction stabilizes the dynein-2 complex structure.

The protein localises to the cytoplasm. It localises to the cell projection. It is found in the cilium. The protein resides in the cytoskeleton. Its subcellular location is the cilium basal body. The protein localises to the cilium axoneme. It localises to the microtubule organizing center. It is found in the centrosome. Acts as one of several non-catalytic accessory components of the cytoplasmic dynein 2 complex (dynein-2 complex), a motor protein complex that drives the movement of cargos along microtubules within cilia and flagella in concert with the intraflagellar transport (IFT) system, facilitating the assembly of these organelles. Involved in the regulation of ciliary length. The chain is Cytoplasmic dynein 2 light intermediate chain 1 (Dync2li1) from Rattus norvegicus (Rat).